The sequence spans 178 residues: Cell wall-binding protein YwsB (178 aa).

A signal peptide spans 1–30; the sequence is MNKPTKLFSTLALAAGMTAAAAGGAGTIHA. 2 consecutive SH3b domains span residues 47–111 and 116–178; these read IDSY…VKAA and TKTK…HMTK.

The protein localises to the secreted. Its subcellular location is the cell wall. With respect to regulation, increases in stationary phase in a strain lacking the WprA protease. This Bacillus subtilis (strain 168) protein is Cell wall-binding protein YwsB (ywsB).